Here is a 786-residue protein sequence, read N- to C-terminus: LPS-assembly protein LptD (786 aa).

Residues 1–24 form the signal peptide; that stretch reads MSFTSRSLLASFTGCLLYGTPAIA.

It belongs to the LptD family. Component of the lipopolysaccharide transport and assembly complex. Interacts with LptE and LptA.

It is found in the cell outer membrane. Its function is as follows. Together with LptE, is involved in the assembly of lipopolysaccharide (LPS) at the surface of the outer membrane. This chain is LPS-assembly protein LptD, found in Aliivibrio fischeri (strain ATCC 700601 / ES114) (Vibrio fischeri).